We begin with the raw amino-acid sequence, 983 residues long: UPF0182 protein CMM_1204 (983 aa).

7 helical membrane-spanning segments follow: residues 16–36 (LAIT…FAGF), 56–76 (WGAG…PVFV), 108–128 (LAMF…ASSG), 161–181 (FYHA…LGVL), 205–225 (IQIA…IWLD), 255–275 (AILA…AVIG), and 281–301 (IIGT…YPAI). A compositionally biased stretch (polar residues) spans 699–714 (QDLWTTPNDPTATTEA). Disordered regions lie at residues 699-718 (QDLW…GTPA) and 884-936 (DSGA…AQDV). Residues 902-918 (GGTGDGATDGATDGGTG) show a composition bias toward gly residues. The segment covering 919–933 (STPTPAPTTSPSAPA) has biased composition (low complexity).

Belongs to the UPF0182 family.

The protein localises to the cell membrane. The polypeptide is UPF0182 protein CMM_1204 (Clavibacter michiganensis subsp. michiganensis (strain NCPPB 382)).